Reading from the N-terminus, the 501-residue chain is GDP-fucose protein O-fucosyltransferase 4 (501 aa).

The Cytoplasmic segment spans residues 1–10; that stretch reads MLLQMAGRGK. The helical; Signal-anchor for type II membrane protein transmembrane segment at 11-31 threads the bilayer; the sequence is MVPCVCLGLLGVLCWVWVSFA. The Lumenal portion of the chain corresponds to 32–501; the sequence is SFPDEQLSLG…MAVRRARGKN (470 aa). Residue asparagine 173 is glycosylated (N-linked (GlcNAc...) asparagine). Cysteine 396 and cysteine 399 are disulfide-bonded. Asparagine 428 and asparagine 478 each carry an N-linked (GlcNAc...) asparagine glycan.

This sequence belongs to the glycosyltransferase 10 family.

The protein localises to the endoplasmic reticulum membrane. The enzyme catalyses L-threonyl-[protein] + GDP-beta-L-fucose = 3-O-(alpha-L-fucosyl)-L-threonyl-[protein] + GDP + H(+). The catalysed reaction is L-seryl-[protein] + GDP-beta-L-fucose = 3-O-(alpha-L-fucosyl)-L-seryl-[protein] + GDP + H(+). Its pathway is protein modification; protein glycosylation. Functionally, protein O-fucosyltransferase that specifically catalyzes O-fucosylation of serine or threonine residues in EMI domains of target proteins. Attaches fucose through an O-glycosidic linkage. O-fucosylation of EMI domain-containing proteins may be required for facilitating protein folding and secretion. This Takifugu rubripes (Japanese pufferfish) protein is GDP-fucose protein O-fucosyltransferase 4 (fut11).